The primary structure comprises 381 residues: Protein YkfC (381 aa).

The Reverse transcriptase domain maps to 72–337; sequence LRDELLSGHY…DGFIFLGHRL (266 aa). The Mg(2+) site is built by Asp166, Asp284, and Asp285.

Belongs to the bacterial reverse transcriptase family.

This chain is Protein YkfC (ykfC), found in Escherichia coli (strain K12).